Here is a 226-residue protein sequence, read N- to C-terminus: ATP synthase subunit C lysine N-methyltransferase (226 aa).

The helical transmembrane segment at 35–55 (VIGGTLVALYAVATPFVAPAL) threads the bilayer. A required for mitochondrial location region spans residues 48-82 (TPFVAPALRKLCLPYVPATTTQVKNVLKMLRSRTG).

The protein belongs to the ANT/ATPSC lysine N-methyltransferase family.

It is found in the mitochondrion membrane. Functionally, mitochondrial protein-lysine N-methyltransferase that promotes chronic pain. Involved in persistent inflammatory and neuropathic pain: methyltransferase activity in the mitochondria of sensory neurons promotes chronic pain via a pathway that depends on the production of reactive oxygen species (ROS) and on the engagement of spinal cord microglia. Protein-lysine N-methyltransferase activity is dependent on S-adenosyl-L-methionine. The chain is ATP synthase subunit C lysine N-methyltransferase (atpsckmt) from Xenopus laevis (African clawed frog).